The following is a 233-amino-acid chain: Transmembrane protein 40 (233 aa).

At Met1 the chain carries N-acetylmethionine. Residues 1 to 14 are compositionally biased toward polar residues; the sequence is METSASSSQPQDNS. Positions 1-143 are disordered; sequence METSASSSQP…RRGSDPASGE (143 aa). The segment covering 50 to 70 has biased composition (low complexity); the sequence is SSSSSSSSSSSSSSSSSSSSS. Over residues 93 to 104 the composition is skewed to gly residues; sequence YPHGNGSPGPGH. A compositionally biased stretch (basic and acidic residues) spans 105-114; it reads GEPDVLKDEL. Position 137 is a phosphoserine (Ser137). The next 2 helical transmembrane spans lie at 160 to 180 and 187 to 207; these read FFHF…YHYY and LGVG…FGLV.

Its subcellular location is the membrane. The polypeptide is Transmembrane protein 40 (TMEM40) (Homo sapiens (Human)).